A 454-amino-acid chain; its full sequence is Bifunctional protein GlmU (454 aa).

The segment at 1 to 232 (MTDRTCLSIV…VDNVIGINNR (232 aa)) is pyrophosphorylase. Residues 11–14 (LAAG), Lys-25, Gln-78, and 83–84 (GT) contribute to the UDP-N-acetyl-alpha-D-glucosamine site. Asp-108 contributes to the Mg(2+) binding site. UDP-N-acetyl-alpha-D-glucosamine contacts are provided by Gly-144, Glu-158, Asn-173, and Asn-230. Residue Asn-230 participates in Mg(2+) binding. A linker region spans residues 233-253 (AELAEAETIWQNRKRRELMLS). Residues 254–454 (GVTLIAPETV…AIKAAKSVSK (201 aa)) form an N-acetyltransferase region. UDP-N-acetyl-alpha-D-glucosamine is bound by residues Arg-319 and Lys-337. The active-site Proton acceptor is the His-349. UDP-N-acetyl-alpha-D-glucosamine-binding residues include Tyr-352 and Asn-363. Acetyl-CoA is bound by residues Ala-366, 372–373 (NY), Ser-391, Ser-409, and Arg-426.

It in the N-terminal section; belongs to the N-acetylglucosamine-1-phosphate uridyltransferase family. In the C-terminal section; belongs to the transferase hexapeptide repeat family. Homotrimer. Mg(2+) serves as cofactor.

The protein localises to the cytoplasm. The enzyme catalyses alpha-D-glucosamine 1-phosphate + acetyl-CoA = N-acetyl-alpha-D-glucosamine 1-phosphate + CoA + H(+). It catalyses the reaction N-acetyl-alpha-D-glucosamine 1-phosphate + UTP + H(+) = UDP-N-acetyl-alpha-D-glucosamine + diphosphate. The protein operates within nucleotide-sugar biosynthesis; UDP-N-acetyl-alpha-D-glucosamine biosynthesis; N-acetyl-alpha-D-glucosamine 1-phosphate from alpha-D-glucosamine 6-phosphate (route II): step 2/2. It functions in the pathway nucleotide-sugar biosynthesis; UDP-N-acetyl-alpha-D-glucosamine biosynthesis; UDP-N-acetyl-alpha-D-glucosamine from N-acetyl-alpha-D-glucosamine 1-phosphate: step 1/1. It participates in bacterial outer membrane biogenesis; LPS lipid A biosynthesis. Its function is as follows. Catalyzes the last two sequential reactions in the de novo biosynthetic pathway for UDP-N-acetylglucosamine (UDP-GlcNAc). The C-terminal domain catalyzes the transfer of acetyl group from acetyl coenzyme A to glucosamine-1-phosphate (GlcN-1-P) to produce N-acetylglucosamine-1-phosphate (GlcNAc-1-P), which is converted into UDP-GlcNAc by the transfer of uridine 5-monophosphate (from uridine 5-triphosphate), a reaction catalyzed by the N-terminal domain. This chain is Bifunctional protein GlmU, found in Brucella abortus (strain S19).